The following is a 105-amino-acid chain: ESAT-6-like protein EsxB (105 aa).

The interval 1–23 (MSQGFKTEADVMRNTAHRVDDTN) is disordered. A compositionally biased stretch (basic and acidic residues) spans 7–21 (TEADVMRNTAHRVDD).

It belongs to the WXG100 family. CFP-10 subfamily. In terms of assembly, forms a tight 1:1 complex with EsxB.

The chain is ESAT-6-like protein EsxB from Corynebacterium diphtheriae (strain ATCC 700971 / NCTC 13129 / Biotype gravis).